Consider the following 553-residue polypeptide: Thioredoxin domain-containing protein 2 (553 aa).

Disordered stretches follow at residues 1–37 (MDVD…DANE) and 77–442 (TEES…EETM). The span at 99 to 143 (PKQDDSPKSSEETIQPKEGDIPKAPEETIQSKKEDLPKSSEKAIQ) shows a compositional bias: basic and acidic residues. 22 tandem repeats follow at residues 113 to 127 (QPKE…EETI), 128 to 142 (QSKK…EKAI), 143 to 157 (QPKE…AKPI), 158 to 172 (QPKL…VKPS), 173 to 187 (QPKE…EETI), 188 to 202 (QSKK…EEAI), 203 to 217 (QPKE…AKPI), 218 to 232 (QPKL…VKPS), 233 to 247 (QPKE…EETI), 248 to 262 (QPKE…AKPI), 263 to 277 (QPKL…VKPS), 278 to 292 (QPKE…EEAI), 293 to 307 (QPKE…EEAI), 308 to 322 (QPKE…EEAI), 323 to 337 (QPKE…EEAI), 338 to 352 (QPKE…EETI), 353 to 367 (QPKK…EEAI), 368 to 382 (QPKE…KQAI), 383 to 397 (QPKE…EEAI), 398 to 412 (PPKE…EETI), 413 to 427 (QPKE…EEAT), and 428 to 442 (PSKE…EETM). Residues 113 to 442 (QPKEGDIPKA…DILKPEEETM (330 aa)) are 22 X 15 AA approximate tandem repeat of Q-P-K-X-G-D-I-P-K-S-[PS]-E-[KE]-X-I. The segment covering 173–209 (QPKEGDIPKAPEETIQSKKEDLPKSSEEAIQPKEGDI) has biased composition (basic and acidic residues). Residues 233–254 (QPKESDIPKSPEETIQPKEGDI) are compositionally biased toward basic and acidic residues. Composition is skewed to basic and acidic residues over residues 278-376 (QPKE…DIPK) and 385-439 (KEGD…KPEE). Ser-362 is modified (phosphoserine). Phosphoserine is present on Ser-392. The Thioredoxin domain maps to 429-553 (SKEGDILKPE…KLEAVIAELK (125 aa)). Cys-480 and Cys-483 are joined by a disulfide.

As to expression, testis-specific. Only expressed during spermiogenesis, prominently in round and elongating spermatids.

It is found in the cytoplasm. Its function is as follows. Probably plays a regulatory role in sperm development. May participate in regulation of fibrous sheath (FS) assembly by supporting the formation of disulfide bonds during sperm tail morphogenesis. May also be required to rectify incorrect disulfide pairing and generate suitable pairs between the FS constituents. Can reduce disulfide bonds in vitro in the presence of NADP and thioredoxin reductase. The protein is Thioredoxin domain-containing protein 2 (TXNDC2) of Homo sapiens (Human).